The sequence spans 341 residues: Anthranilate phosphoribosyltransferase (341 aa).

5-phospho-alpha-D-ribose 1-diphosphate contacts are provided by residues G79, 82-83, T87, 89-92, 107-115, and S119; these read GD, NIST, and KHGNRAVSS. Position 79 (G79) interacts with anthranilate. S91 contacts Mg(2+). N110 serves as a coordination point for anthranilate. R165 lines the anthranilate pocket. 2 residues coordinate Mg(2+): D224 and E225.

It belongs to the anthranilate phosphoribosyltransferase family. In terms of assembly, homodimer. Mg(2+) serves as cofactor.

The catalysed reaction is N-(5-phospho-beta-D-ribosyl)anthranilate + diphosphate = 5-phospho-alpha-D-ribose 1-diphosphate + anthranilate. The protein operates within amino-acid biosynthesis; L-tryptophan biosynthesis; L-tryptophan from chorismate: step 2/5. Catalyzes the transfer of the phosphoribosyl group of 5-phosphorylribose-1-pyrophosphate (PRPP) to anthranilate to yield N-(5'-phosphoribosyl)-anthranilate (PRA). The protein is Anthranilate phosphoribosyltransferase of Bacillus mycoides (strain KBAB4) (Bacillus weihenstephanensis).